A 1015-amino-acid polypeptide reads, in one-letter code: Putative helicase mov-10-B.2 (1015 aa).

Positions 94-130 (QWFRPRRRQQNQANATPGNVSSVTPSSDQGPSCPESG) are disordered. The span at 109–123 (TPGNVSSVTPSSDQG) shows a compositional bias: polar residues. 555–562 (GPPGTGKT) contributes to the ATP binding site. The DEAG box signature appears at 677–680 (DEAG).

Belongs to the DNA2/NAM7 helicase family. SDE3 subfamily.

The protein resides in the cytoplasm. It is found in the P-body. The enzyme catalyses ATP + H2O = ADP + phosphate + H(+). Probable RNA helicase. Required for RNA-mediated gene silencing by the RNA-induced silencing complex (RISC). Required for both miRNA-mediated translational repression and miRNA-mediated cleavage of complementary mRNAs by RISC. This chain is Putative helicase mov-10-B.2 (mov10b.2), found in Danio rerio (Zebrafish).